The chain runs to 113 residues: Ig heavy chain V-III region U61 (113 aa).

The Ig-like domain maps to 1-113 (EVKLEESGGG…YWGQGTLVPV (113 aa)). Cys-22 and Cys-98 form a disulfide bridge.

The sequence is that of Ig heavy chain V-III region U61 from Mus musculus (Mouse).